Consider the following 925-residue polypeptide: Calpain-B (925 aa).

The Calpain catalytic domain maps to 259-558 (MFEDPDFPAT…FDRVEICNLS (300 aa)). Residues C314, H470, and N498 contribute to the active site. The tract at residues 559-728 (PDSLTEDQQH…TRNNMEENDD (170 aa)) is domain III. Positions 723 to 753 (MEENDDEVGFGETDDRIAPSLPPPTPKEEDD) are disordered. The linker stretch occupies residues 729 to 748 (EVGFGETDDRIAPSLPPPTP). The tract at residues 749 to 925 (KEEDDPQRIA…DDWLERTIYS (177 aa)) is domain IV. EF-hand domains lie at 796-831 (FSKD…IAKW) and 826-861 (TDIA…AGYH). Ca(2+) contacts are provided by D809, D811, S813, R815, E820, D839, T843, S845, and H850.

The protein belongs to the peptidase C2 family. Post-translationally, undergoes calcium-dependent autolytic cleavage between Asn-74 and Ala-75 and between Gln-224 and Asn-225 to produce two major products, calpain B catalytic subunit 1 and calpain B catalytic subunit 2. This autolysis is necessary for activation of the protein. In terms of tissue distribution, strongly expressed in follicular and border cells of the oocyte. Ubiquitously expressed in early embryos. Localized to the trachea and their orifices, and to the larynx of late embryos. Restricted to the salivary gland in third instar larvae.

The protein localises to the cytoplasm. The protein resides in the membrane. With respect to regulation, activated by millimolar concentrations of calcium. In terms of biological role, calcium-regulated non-lysosomal thiol-protease. The sequence is that of Calpain-B from Drosophila melanogaster (Fruit fly).